A 721-amino-acid chain; its full sequence is Pentatricopeptide repeat-containing protein At3g49710 (721 aa).

PPR repeat units lie at residues 42-72, 73-103, 104-138, 139-169, 172-202, 204-238, 239-273, 274-307, 308-343, 344-378, 380-410, 411-445, 446-476, and 482-512; these read STYL…TEEP, NVFS…IPQP, DTVS…GFEV, DGFT…SGGF, YSSV…MDEL, DEVS…GFKI, DMFT…GFHQ, NSHV…ILSP, DLVV…GHRP, DDCS…HIPS, RISV…MPEL, NAVS…GIAP, NKIT…MKET, and EAEH…MPYK. Residues 517–592 form a type E motif region; the sequence is AWAALLGACR…KPGCSWIEVK (76 aa). A type E(+) motif region spans residues 593 to 623; that stretch reads KKKHVFVAEDWSHPMIREVNEYLEEMMKKMK. The interval 624-721 is type DYW motif; the sequence is KVGYVMDKKW…DGKCSCGDYW (98 aa).

It belongs to the PPR family. PCMP-H subfamily.

The chain is Pentatricopeptide repeat-containing protein At3g49710 (PCMP-H79) from Arabidopsis thaliana (Mouse-ear cress).